A 170-amino-acid polypeptide reads, in one-letter code: Large ribosomal subunit protein uL10 (170 aa).

It belongs to the universal ribosomal protein uL10 family. In terms of assembly, part of the ribosomal stalk of the 50S ribosomal subunit. The N-terminus interacts with L11 and the large rRNA to form the base of the stalk. The C-terminus forms an elongated spine to which L12 dimers bind in a sequential fashion forming a multimeric L10(L12)X complex.

Functionally, forms part of the ribosomal stalk, playing a central role in the interaction of the ribosome with GTP-bound translation factors. The polypeptide is Large ribosomal subunit protein uL10 (Novosphingobium aromaticivorans (strain ATCC 700278 / DSM 12444 / CCUG 56034 / CIP 105152 / NBRC 16084 / F199)).